Consider the following 266-residue polypeptide: Mitochondrial genome maintenance protein MGM101 (266 aa).

Residues 1–23 (MLHSTKLVFRATPQALCFPVRSY) constitute a mitochondrion transit peptide. Composition is skewed to polar residues over residues 37–47 (KTTSKLAPSIT) and 57–68 (PSLQEPQSATST). A disordered region spans residues 37–68 (KTTSKLAPSITTEDEVAEQDPSLQEPQSATST).

It belongs to the MGM101 family. Forms homooligomers in vitro.

Its subcellular location is the mitochondrion matrix. It localises to the mitochondrion nucleoid. Functionally, plays a role in the replication of the mitochondrial genome and the maintenance of its telomeres. Able to catalyze strand annealing and D-loop formation. Binds a wide variety of DNA substrates. Exhibited the highest affinity for DNA molecules carrying 3' ssDNA overhangs (Y-form, 3' FLAP, 3' overhang) and for substrates with complex structures (X-O and Fork). Forms homogeneous ring-shaped structures at the ssDNA native telomeres ends. Oligomers seem to bind to the ssDNA as a filament until they reach the double-stranded region and induce the formation of bends and loops within the double-stranded part of the molecules. This is Mitochondrial genome maintenance protein MGM101 from Candida parapsilosis (strain CDC 317 / ATCC MYA-4646) (Yeast).